Reading from the N-terminus, the 254-residue chain is Aspartate/glutamate leucyltransferase (254 aa).

This sequence belongs to the R-transferase family. Bpt subfamily.

It is found in the cytoplasm. The catalysed reaction is N-terminal L-glutamyl-[protein] + L-leucyl-tRNA(Leu) = N-terminal L-leucyl-L-glutamyl-[protein] + tRNA(Leu) + H(+). It catalyses the reaction N-terminal L-aspartyl-[protein] + L-leucyl-tRNA(Leu) = N-terminal L-leucyl-L-aspartyl-[protein] + tRNA(Leu) + H(+). Its function is as follows. Functions in the N-end rule pathway of protein degradation where it conjugates Leu from its aminoacyl-tRNA to the N-termini of proteins containing an N-terminal aspartate or glutamate. This Mesorhizobium japonicum (strain LMG 29417 / CECT 9101 / MAFF 303099) (Mesorhizobium loti (strain MAFF 303099)) protein is Aspartate/glutamate leucyltransferase.